Consider the following 337-residue polypeptide: Phenylalanine--tRNA ligase alpha subunit (337 aa).

Glu-258 serves as a coordination point for Mg(2+).

This sequence belongs to the class-II aminoacyl-tRNA synthetase family. Phe-tRNA synthetase alpha subunit type 1 subfamily. In terms of assembly, tetramer of two alpha and two beta subunits. Mg(2+) is required as a cofactor.

It is found in the cytoplasm. The enzyme catalyses tRNA(Phe) + L-phenylalanine + ATP = L-phenylalanyl-tRNA(Phe) + AMP + diphosphate + H(+). In Burkholderia vietnamiensis (strain G4 / LMG 22486) (Burkholderia cepacia (strain R1808)), this protein is Phenylalanine--tRNA ligase alpha subunit.